A 275-amino-acid chain; its full sequence is MPSPIALLAAATERIERVDAEALLLHALDCDRAWLFTHGDIPLAAAATESFQALVEQRARGIPVAYLIGRRGFWTLDVIVSSATLIPRAETETLVEQALQRLDHASERRVADLGTGSGAIALAIACERPQAQVLATDNSAAALDIAARNASAHGLNHVVFREGNWYEALLGERFDLIVSNPPYIAVTDPHLTQGDLRFEPPSALISGGDGLDALRILAAGAPAHLRPGGWLVLEHGWDQGAAVRTLLHTAGLVAVATMQDLEARDRVTVGRCPGF.

Residues 114–118 (GTGSG), D137, W165, and N180 each bind S-adenosyl-L-methionine. 180–183 (NPPY) is a substrate binding site.

This sequence belongs to the protein N5-glutamine methyltransferase family. PrmC subfamily.

The catalysed reaction is L-glutaminyl-[peptide chain release factor] + S-adenosyl-L-methionine = N(5)-methyl-L-glutaminyl-[peptide chain release factor] + S-adenosyl-L-homocysteine + H(+). Functionally, methylates the class 1 translation termination release factors RF1/PrfA and RF2/PrfB on the glutamine residue of the universally conserved GGQ motif. In Xylella fastidiosa (strain Temecula1 / ATCC 700964), this protein is Release factor glutamine methyltransferase.